A 496-amino-acid polypeptide reads, in one-letter code: Probable G-protein coupled receptor K01A12.3 (496 aa).

The Extracellular portion of the chain corresponds to 1-19; it reads MESVTRHRADMISFFTFDS. A helical membrane pass occupies residues 20 to 40; it reads YISIVGVAYTAVGLLGVFCNV. At 41-58 the chain is on the cytoplasmic side; the sequence is TTVIMILTNRVFRLSAYT. A helical transmembrane segment spans residues 59–79; the sequence is IMANVALADSIVMLIAGVACG. Residues 80–128 lie on the Extracellular side of the membrane; that stretch reads MDVMWPNPNDLTSFIPSLEEPYQKIAPVSLRNDSKTDSSAAGFETGNIH. Asn111 carries an N-linked (GlcNAc...) asparagine glycan. The chain crosses the membrane as a helical span at residues 129 to 149; that stretch reads AVLSFSFVAAWTAGVISYAML. The Cytoplasmic portion of the chain corresponds to 150–169; the sequence is GTNRCIAICYYGTKARALNQ. The helical transmembrane segment at 170–190 threads the bilayer; that stretch reads VSVAVACSASTWIVGIAAALV. At 191-216 the chain is on the extracellular side; that stretch reads GTLSQPMIGIQRTMWSISFLEPRPHT. The chain crosses the membrane as a helical span at residues 217 to 237; it reads TLFFTLLCAANLLGLGAQWVC. The Cytoplasmic portion of the chain corresponds to 238-285; that stretch reads STLVLLKIRQVKKKISKNKLNQNSANRFRKQVILALNEIIVTGNFKAR. A helical transmembrane segment spans residues 286-306; it reads LTFQFFYPSILCTISTFLFFI. Residues 307–318 lie on the Extracellular side of the membrane; it reads KPYAFEYLSGWQ. Residues 319–339 traverse the membrane as a helical segment; it reads LVILHLLWLCNHTCNPFIYAY. Over 340–496 the chain is Cytoplasmic; it reads FNDRMRLTYK…WVKFAKKASI (157 aa). The tract at residues 451-470 is disordered; the sequence is TKELESAHNQGGSSRFDSER.

It belongs to the G-protein coupled receptor 1 family.

It localises to the cell membrane. In Caenorhabditis elegans, this protein is Probable G-protein coupled receptor K01A12.3.